The sequence spans 107 residues: Nucleoid-associated protein BLi00029/BL02358 (107 aa).

Residues 1-27 form a disordered region; it reads MRGGMGNMQKMMKQMQKMQKDMQKAQE. The segment covering 8–17 has biased composition (low complexity); sequence MQKMMKQMQK. Residues 18-27 show a composition bias toward basic and acidic residues; sequence MQKDMQKAQE.

It belongs to the YbaB/EbfC family. Homodimer.

It localises to the cytoplasm. The protein resides in the nucleoid. Functionally, binds to DNA and alters its conformation. May be involved in regulation of gene expression, nucleoid organization and DNA protection. In Bacillus licheniformis (strain ATCC 14580 / DSM 13 / JCM 2505 / CCUG 7422 / NBRC 12200 / NCIMB 9375 / NCTC 10341 / NRRL NRS-1264 / Gibson 46), this protein is Nucleoid-associated protein BLi00029/BL02358.